Consider the following 199-residue polypeptide: Cytochrome c oxidase subunit 2 (199 aa).

Residues 1–13 (AICSLVLYLLSLM) form a helical membrane-spanning segment. Topologically, residues 14–26 (LMEKLSSNTVDAQ) are mitochondrial matrix. Residues 27 to 54 (EVELIWTILPAIVLILLALPSLQILYMM) traverse the membrane as a helical segment. Over 55 to 199 (DEIDEPDLTL…SSLLSSSSSL (145 aa)) the chain is Mitochondrial intermembrane. Cu cation-binding residues include histidine 128, cysteine 163, glutamate 165, cysteine 167, histidine 171, and methionine 174. Glutamate 165 contributes to the Mg(2+) binding site.

It belongs to the cytochrome c oxidase subunit 2 family. As to quaternary structure, component of the cytochrome c oxidase (complex IV, CIV), a multisubunit enzyme composed of 14 subunits. The complex is composed of a catalytic core of 3 subunits MT-CO1, MT-CO2 and MT-CO3, encoded in the mitochondrial DNA, and 11 supernumerary subunits COX4I, COX5A, COX5B, COX6A, COX6B, COX6C, COX7A, COX7B, COX7C, COX8 and NDUFA4, which are encoded in the nuclear genome. The complex exists as a monomer or a dimer and forms supercomplexes (SCs) in the inner mitochondrial membrane with NADH-ubiquinone oxidoreductase (complex I, CI) and ubiquinol-cytochrome c oxidoreductase (cytochrome b-c1 complex, complex III, CIII), resulting in different assemblies (supercomplex SCI(1)III(2)IV(1) and megacomplex MCI(2)III(2)IV(2)). Found in a complex with TMEM177, COA6, COX18, COX20, SCO1 and SCO2. Interacts with TMEM177 in a COX20-dependent manner. Interacts with COX20. Interacts with COX16. It depends on Cu cation as a cofactor.

It localises to the mitochondrion inner membrane. The catalysed reaction is 4 Fe(II)-[cytochrome c] + O2 + 8 H(+)(in) = 4 Fe(III)-[cytochrome c] + 2 H2O + 4 H(+)(out). Component of the cytochrome c oxidase, the last enzyme in the mitochondrial electron transport chain which drives oxidative phosphorylation. The respiratory chain contains 3 multisubunit complexes succinate dehydrogenase (complex II, CII), ubiquinol-cytochrome c oxidoreductase (cytochrome b-c1 complex, complex III, CIII) and cytochrome c oxidase (complex IV, CIV), that cooperate to transfer electrons derived from NADH and succinate to molecular oxygen, creating an electrochemical gradient over the inner membrane that drives transmembrane transport and the ATP synthase. Cytochrome c oxidase is the component of the respiratory chain that catalyzes the reduction of oxygen to water. Electrons originating from reduced cytochrome c in the intermembrane space (IMS) are transferred via the dinuclear copper A center (CU(A)) of subunit 2 and heme A of subunit 1 to the active site in subunit 1, a binuclear center (BNC) formed by heme A3 and copper B (CU(B)). The BNC reduces molecular oxygen to 2 water molecules using 4 electrons from cytochrome c in the IMS and 4 protons from the mitochondrial matrix. The sequence is that of Cytochrome c oxidase subunit 2 (MT-CO2) from Rhea americana (Greater rhea).